We begin with the raw amino-acid sequence, 1227 residues long: MANGVIPPPGGASPLPQVRVPLEEPPLGPDVEEEDDDLGKTLAVSRFGDLISKTPAWDPEKPSRSYSERDFEFHRHTSHHTHHPLSARLPPPHKLRRPPPTSARHTRRKRKKEKTSAPPSEGTPPIQEEGGAGAEEEEEEEEEEEGESEAEPVEPLPPGPPQKAKFSIGSDEDDSPGLPVKAPCAKALPSVGLQSDQSPQRSGSSPSPRARASRISTEKSRPWSPSASYDLRERLCPGSALGNPGPEQRVPTDEAEAQMLGSADLDDMKSHRLEDNPGVRRHLVKKPSRIQGGRGSPSGLAPILRRKKKKKKLDRRPHEVFVELNELMLDRSQEPHWRETARWIKFEEDVEEETERWGKPHVASLSFRSLLELRRTIAQGAALLDLEQTTLPGIAHLVVETMIVSDQIRPEDRASVLRTLLLKHSHPNDDKDSGFFPRNPSSSSVNSVLGNHHPTPSHGPDGAVPTMADDQGEPAPLWPHDPDAKEKPLHMPGGDGHRGKSLKLLEKIPEDAEATVVLVGCVPFLEQPAAAFVRLSEAVLLESVLEVPVPVRFLFVMLGPSHTSTDYHELGRSIATLMSDKLFHEAAYQADDRQDLLGAISEFLDGSIVIPPSEVEGRDLLRSVAAFQRELLRKRREREQTKVEMTTRGGYAAPGKELSLEMGGSEATSEDDPLQRTGSVFGGLVRDVKRRYPHYPSDLRDALHSQCVAAVLFIYFAALSPAITFGGLLGEKTEGLMGVSELIVSTAVLGVLFSLLGAQPLLVVGFSGPLLVFEEAFFKFCRAQDLEYLTGRVWVGLWLVVFVLALVAAEGSFLVRYISPFTQEIFAFLISLIFIYETFHKLYKVFTEHPLLPFYPPDEALETGLELNSSALPPTEGPPGPRNQPNTALLSLILMLGTFLIAFFLRKFRNSRFLGGKARRIIGDFGIPISILVMVLVDYSITDTYTQKLTVPTGLSVTSPHKRTWFIPPLGSARPFPPWMMVAAAVPALLVLILIFMETQITALIVSQKARRLLKGSGFHLDLLLIGSLGGLCGLFGLPWLTAATVRSVTHVNALTVMRTAIAPGDKPQIQEVREQRVTGVLIASLVGLSIVMGAVLRRIPLAVLFGIFLYMGVTSLSGIQLSQRLLLIFMPAKHHPEQPYVTKVKTWRMHLFTCIQLGCIALLWVVKSTAASLAFPFLLLLTVPLRRCLLPRLFQDRELQALDSEDAEPNFDEDGQDEYNELHMPV.

Over residues 1–11 (MANGVIPPPGG) the composition is skewed to pro residues. Disordered regions lie at residues 1 to 256 (MANG…DEAE), 286 to 312 (KPSR…KKKK), and 428 to 497 (NDDK…GDGH). The Cytoplasmic portion of the chain corresponds to 1–707 (MANGVIPPPG…DLRDALHSQC (707 aa)). Positions 58–75 (DPEKPSRSYSERDFEFHR) are enriched in basic and acidic residues. Composition is skewed to basic residues over residues 76–97 (HTSH…KLRR) and 104–113 (RHTRRKRKKE). Over residues 134–152 (AEEEEEEEEEEEGESEAEP) the composition is skewed to acidic residues. Phosphoserine is present on residues serine 167, serine 170, serine 175, and serine 198. Residues 194–215 (QSDQSPQRSGSSPSPRARASRI) are compositionally biased toward low complexity. An Omega-N-methylarginine modification is found at arginine 294. A compositionally biased stretch (low complexity) spans 435 to 448 (FFPRNPSSSSVNSV). Over residues 480 to 497 (HDPDAKEKPLHMPGGDGH) the composition is skewed to basic and acidic residues. The next 4 helical transmembrane spans lie at 708–730 (VAAV…GLLG), 736–773 (LMGV…LLVF), 793–815 (VWVG…SFLV), and 825–846 (IFAF…YKVF). The segment at 708-1227 (VAAVLFIYFA…DEYNELHMPV (520 aa)) is membrane (anion exchange). The N-linked (GlcNAc...) asparagine glycan is linked to asparagine 868. Residues 888–905 (ALLSLILMLGTFLIAFFL) traverse the membrane as a helical segment. The Cytoplasmic segment spans residues 906-920 (RKFRNSRFLGGKARR). Transmembrane regions (helical) follow at residues 921 to 941 (IIGD…DYSI), 975 to 997 (PFPP…LIFM), 1023 to 1044 (LLLI…LTAA), 1078 to 1123 (VTGV…IQLS), and 1150 to 1186 (MHLF…TVPL). Cysteine 1160 carries the S-palmitoyl cysteine lipid modification.

It belongs to the anion exchanger (TC 2.A.31) family. In terms of tissue distribution, expressed in the brain.

It localises to the cell membrane. It catalyses the reaction hydrogencarbonate(in) + chloride(out) = hydrogencarbonate(out) + chloride(in). Its activity is regulated as follows. Inhibited by 4,4'-diisothiocyanatostilbene-2,2'-disulfonic acid (DIDS). Its function is as follows. Sodium-independent anion exchanger which mediates the electroneutral exchange of chloride for bicarbonate ions across the cell membrane. May be involved in the regulation of intracellular pH, and the modulation of cardiac action potential. In Mus musculus (Mouse), this protein is Anion exchange protein 3 (Slc4a3).